The sequence spans 2326 residues: Nonribosomal peptide synthetase inpB (2326 aa).

One can recognise a Carrier 1 domain in the interval 8 to 84; the sequence is SPSEWLQLEL…SLYSMAQGPA (77 aa). An O-(pantetheine 4'-phosphoryl)serine modification is found at serine 45. The tract at residues 87–121 is disordered; the sequence is ASSSTSDNASDKDSSLDDSETGALTPTTDAGSSLA. Polar residues predominate over residues 108–121; it reads GALTPTTDAGSSLA. A condensation 1 region spans residues 144-568; the sequence is QAVVPCSAIQ…LLSPGEVSQL (425 aa). The segment at 593–997 is adenylation 1; it reads LQPGAAAVNS…GRRDTQVKIR (405 aa). In terms of domain architecture, Carrier 2 spans 1145-1221; that stretch reads EPSTETEFKL…DLARAVESRV (77 aa). Serine 1182 bears the O-(pantetheine 4'-phosphoryl)serine mark. Positions 1226-1247 are disordered; sequence DEEDPAPFSVWRESRGSEPSEE. The interval 1266–1680 is condensation 2; sequence EDVLPCTALQ…LLSPEDVNQL (415 aa). The tract at residues 1702 to 2097 is adenylation 2; it reads EVARSRPGAA…GRIDTQIKIR (396 aa). In terms of domain architecture, Carrier 3 spans 2216–2294; that stretch reads PPSTEMEKAL…DLAVLLEKRP (79 aa). An O-(pantetheine 4'-phosphoryl)serine modification is found at serine 2253.

Belongs to the NRP synthetase family.

It participates in secondary metabolite biosynthesis. In terms of biological role, nonribosomal peptide synthetase; part of the inp gene cluster that mediates the biosynthesis of fellutamide B, a mycotoxin that acts as a proteasome inhibitor. In the first step of fellutabmide B biosynthesis inpC activates 3-hydroxydodecanoic acid to generate 3-hydroxydodecanoyl-AMP that is then loaded onto the T0 domain of inpB. The 3-hydroxydodecanoyl-S-phosphopantetheinyl-T0 is sequentially extended with L-Asn and L-Gln by the two CAT modules of inpB. The linear lipodipeptide from inpB is then transferred onto inpA for the addition of the third amino acid, L-Leu. Reductive releasing of the lipotripeptide by the TE domain of inpA produces (2S)-fellutamide B. InpF might be involved in the release and transfer of the lipodipeptide from inpB to inpA. The inp cluster-encoded proteasome subunit inpE confers resistance to internally produced fellutamides. The MFS efflux transporter inpD may contribute to fellutamide resistance as well. The polypeptide is Nonribosomal peptide synthetase inpB (Emericella nidulans (strain FGSC A4 / ATCC 38163 / CBS 112.46 / NRRL 194 / M139) (Aspergillus nidulans)).